Here is a 320-residue protein sequence, read N- to C-terminus: Nucleotide-binding protein Acid_7395 (320 aa).

The interval 1 to 34 is disordered; sequence MPLRKKGAATTKAAATRKDSAKAPASSKRKDAPQ. 44–51 lines the ATP pocket; that stretch reads GLSGSGKG. 94–97 contributes to the GTP binding site; sequence DIRE.

It belongs to the RapZ-like family.

Functionally, displays ATPase and GTPase activities. The protein is Nucleotide-binding protein Acid_7395 of Solibacter usitatus (strain Ellin6076).